Reading from the N-terminus, the 382-residue chain is tRNA-specific 2-thiouridylase MnmA (382 aa).

ATP-binding positions include alanine 18–serine 25 and leucine 44. Residue cysteine 112 is the Nucleophile of the active site. Cysteine 112 and cysteine 209 are joined by a disulfide. Residue glycine 136 participates in ATP binding. Positions arginine 159 to glutamine 161 are interaction with tRNA. Cysteine 209 acts as the Cysteine persulfide intermediate in catalysis.

It belongs to the MnmA/TRMU family.

It localises to the cytoplasm. It catalyses the reaction S-sulfanyl-L-cysteinyl-[protein] + uridine(34) in tRNA + AH2 + ATP = 2-thiouridine(34) in tRNA + L-cysteinyl-[protein] + A + AMP + diphosphate + H(+). Functionally, catalyzes the 2-thiolation of uridine at the wobble position (U34) of tRNA, leading to the formation of s(2)U34. The sequence is that of tRNA-specific 2-thiouridylase MnmA from Methylobacterium sp. (strain 4-46).